Reading from the N-terminus, the 463-residue chain is tRNA modification GTPase MnmE (463 aa).

Arginine 30, glutamate 92, and arginine 132 together coordinate (6S)-5-formyl-5,6,7,8-tetrahydrofolate. In terms of domain architecture, TrmE-type G spans 227 to 386 (GLRVALVGRP…LVQAVLERCG (160 aa)). Position 237 (asparagine 237) interacts with K(+). GTP is bound by residues 237–242 (NVGKSS), 256–262 (TDLPGTT), 281–284 (DTAG), and 342–345 (NKAD). Serine 241 lines the Mg(2+) pocket. Residues threonine 256, leucine 258, and threonine 261 each coordinate K(+). Threonine 262 lines the Mg(2+) pocket. Lysine 463 is a (6S)-5-formyl-5,6,7,8-tetrahydrofolate binding site.

It belongs to the TRAFAC class TrmE-Era-EngA-EngB-Septin-like GTPase superfamily. TrmE GTPase family. Homodimer. Heterotetramer of two MnmE and two MnmG subunits. K(+) serves as cofactor.

It is found in the cytoplasm. Exhibits a very high intrinsic GTPase hydrolysis rate. Involved in the addition of a carboxymethylaminomethyl (cmnm) group at the wobble position (U34) of certain tRNAs, forming tRNA-cmnm(5)s(2)U34. This chain is tRNA modification GTPase MnmE, found in Synechococcus sp. (strain CC9311).